Reading from the N-terminus, the 873-residue chain is Nitrate reductase [NADPH] (873 aa).

Positions 30-61 (TELDTADIPLPPPSKEPTEVLSLDKTTPDSHV) are disordered. Cysteine 150 contacts Mo-molybdopterin. One can recognise a Cytochrome b5 heme-binding domain in the interval 512 to 587 (TRIIDLEEFK…MPDYHIGTLD (76 aa)). Residues histidine 547 and histidine 570 each coordinate heme. The FAD-binding FR-type domain maps to 616-729 (KAWTKATLTK…KGPTGRFEYL (114 aa)). Residues 672–675 (RSYT), 689–693 (LIKIY), 703–705 (KMT), and threonine 756 contribute to the FAD site. 843–852 (MVLVCGPEAM) is a binding site for NADP(+).

The protein belongs to the nitrate reductase family. As to quaternary structure, homodimer. Requires FAD as cofactor. Heme serves as cofactor. The cofactor is Mo-molybdopterin.

It carries out the reaction nitrite + NADP(+) + H2O = nitrate + NADPH + H(+). In terms of biological role, nitrate reductase is a key enzyme involved in the first step of nitrate assimilation in plants, fungi and bacteria. The protein is Nitrate reductase [NADPH] (niaD) of Emericella nidulans (strain FGSC A4 / ATCC 38163 / CBS 112.46 / NRRL 194 / M139) (Aspergillus nidulans).